A 134-amino-acid chain; its full sequence is Transcription antitermination protein NusB (134 aa).

Belongs to the NusB family.

Its function is as follows. Involved in transcription antitermination. Required for transcription of ribosomal RNA (rRNA) genes. Binds specifically to the boxA antiterminator sequence of the ribosomal RNA (rrn) operons. In Shewanella sp. (strain MR-4), this protein is Transcription antitermination protein NusB.